We begin with the raw amino-acid sequence, 231 residues long: Protein RhiA (231 aa).

In terms of biological role, may be involved in plant-microbe interaction. The protein is Protein RhiA (rhiA) of Rhizobium leguminosarum bv. viciae.